A 430-amino-acid chain; its full sequence is Gamma-glutamyl phosphate reductase (430 aa).

This sequence belongs to the gamma-glutamyl phosphate reductase family.

It is found in the cytoplasm. It carries out the reaction L-glutamate 5-semialdehyde + phosphate + NADP(+) = L-glutamyl 5-phosphate + NADPH + H(+). It functions in the pathway amino-acid biosynthesis; L-proline biosynthesis; L-glutamate 5-semialdehyde from L-glutamate: step 2/2. Its function is as follows. Catalyzes the NADPH-dependent reduction of L-glutamate 5-phosphate into L-glutamate 5-semialdehyde and phosphate. The product spontaneously undergoes cyclization to form 1-pyrroline-5-carboxylate. The chain is Gamma-glutamyl phosphate reductase from Polaromonas naphthalenivorans (strain CJ2).